A 491-amino-acid chain; its full sequence is Argininosuccinate lyase (491 aa).

This sequence belongs to the lyase 1 family. Argininosuccinate lyase subfamily.

Its subcellular location is the cytoplasm. It catalyses the reaction 2-(N(omega)-L-arginino)succinate = fumarate + L-arginine. Its pathway is amino-acid biosynthesis; L-arginine biosynthesis; L-arginine from L-ornithine and carbamoyl phosphate: step 3/3. The chain is Argininosuccinate lyase from Methanococcoides burtonii (strain DSM 6242 / NBRC 107633 / OCM 468 / ACE-M).